A 675-amino-acid chain; its full sequence is Methionine--tRNA ligase (675 aa).

The 'HIGH' region motif lies at 15-25 (PYANGSIHLGH). Zn(2+)-binding residues include Cys-146, Cys-149, Cys-159, and Cys-162. The 'KMSKS' region signature appears at 331-335 (KMSKS). Residue Lys-334 coordinates ATP. In terms of domain architecture, tRNA-binding spans 574–675 (DFAKIDLRIA…EGAQPGMKVK (102 aa)).

The protein belongs to the class-I aminoacyl-tRNA synthetase family. MetG type 1 subfamily. Homodimer. Zn(2+) serves as cofactor.

The protein resides in the cytoplasm. The enzyme catalyses tRNA(Met) + L-methionine + ATP = L-methionyl-tRNA(Met) + AMP + diphosphate. Is required not only for elongation of protein synthesis but also for the initiation of all mRNA translation through initiator tRNA(fMet) aminoacylation. This is Methionine--tRNA ligase from Pseudoalteromonas atlantica (strain T6c / ATCC BAA-1087).